Here is a 341-residue protein sequence, read N- to C-terminus: MSAVLRKPKTFKLRSLHSEKKFGVAGRSCEEVLRKGCQRLQLPIPGSRLCLYEDGTELTGDYFWSAPDNSELVLLTAGQTWQGFVSDISRFLSVFQEPHAGVIQAARQLLWDERAPLRQKLLADLLGTVSENIAAETRAEDPPWFEGLESRFRSKSGYLRYSCESRIRSYLREVTSGASLVGAEAREEYLRLVGSMQQKLQAAQYNSSYFDRGAKAGRRLCTPEGWFSCQGPFDVDDCTSRHSINPYSNRESRVLFSTWNLDHVIEKKRVVVPALAAAVHDAEGREVDWEYFYRLLFTLENLKLVHIACHKKTTHKLHCDPSRVYCTPAAPRRKRHARHRL.

In terms of domain architecture, CIDE-N spans 7–83 (KPKTFKLRSL…LLTAGQTWQG (77 aa)).

Heterodimer of DFFA and DFFB. Interacts with H1-1.

It is found in the cytoplasm. It localises to the nucleus. With respect to regulation, inhibited by DFFA (DFF45). Interacts with HIST1H1A. Nuclease that induces DNA fragmentation and chromatin condensation during apoptosis. Degrades naked DNA and induces apoptotic morphology. In Bos taurus (Bovine), this protein is DNA fragmentation factor subunit beta (DFFB).